The following is a 217-amino-acid chain: Growth hormone variant (217 aa).

The signal sequence occupies residues 1-26; sequence MAAGSWTCLILAIALLCLPWLQEGSA. 2 disulfide bridges follow: Cys-79-Cys-191 and Cys-208-Cys-215. Ser-132 and Ser-176 each carry phosphoserine.

Belongs to the somatotropin/prolactin family. In terms of tissue distribution, expressed in the placenta.

Its subcellular location is the secreted. In terms of biological role, plays an important role in growth control. Its major role in stimulating body growth is to stimulate the liver and other tissues to secrete IGF1. It stimulates both the differentiation and proliferation of myoblasts. It also stimulates amino acid uptake and protein synthesis in muscle and other tissues. This is Growth hormone variant (GH2) from Macaca mulatta (Rhesus macaque).